The chain runs to 906 residues: Protein translocase subunit SecA (906 aa).

ATP-binding positions include Gln-89, 107–111 (GEGKT), and Asp-502. A disordered region spans residues 829–898 (EAPPEPELPP…ACPCGSGKKY (70 aa)). Over residues 858–877 (WSDHQHDERNVPAAERDPAD) the composition is skewed to basic and acidic residues. Zn(2+) contacts are provided by Cys-890, Cys-892, Cys-901, and His-902.

It belongs to the SecA family. Monomer and homodimer. Part of the essential Sec protein translocation apparatus which comprises SecA, SecYEG and auxiliary proteins SecDF-YajC and YidC. It depends on Zn(2+) as a cofactor.

The protein localises to the cell inner membrane. It is found in the cytoplasm. The enzyme catalyses ATP + H2O + cellular proteinSide 1 = ADP + phosphate + cellular proteinSide 2.. In terms of biological role, part of the Sec protein translocase complex. Interacts with the SecYEG preprotein conducting channel. Has a central role in coupling the hydrolysis of ATP to the transfer of proteins into and across the cell membrane, serving both as a receptor for the preprotein-SecB complex and as an ATP-driven molecular motor driving the stepwise translocation of polypeptide chains across the membrane. The protein is Protein translocase subunit SecA of Brucella anthropi (strain ATCC 49188 / DSM 6882 / CCUG 24695 / JCM 21032 / LMG 3331 / NBRC 15819 / NCTC 12168 / Alc 37) (Ochrobactrum anthropi).